We begin with the raw amino-acid sequence, 189 residues long: HGPRTase-like protein (189 aa).

The protein belongs to the purine/pyrimidine phosphoribosyltransferase family. Archaeal HPRT subfamily.

May catalyze a purine salvage reaction, the substrate is unknown. The chain is HGPRTase-like protein from Natronomonas pharaonis (strain ATCC 35678 / DSM 2160 / CIP 103997 / JCM 8858 / NBRC 14720 / NCIMB 2260 / Gabara) (Halobacterium pharaonis).